The chain runs to 169 residues: Heat shock protein beta-7 (169 aa).

A disordered region spans residues 1–37 (MSHRTSSAFRAERSFRSSSSSSSSSSSSASRALPAQD). The tract at residues 1–70 (MSHRTSSAFR…PLAFPARPGG (70 aa)) is required for localization to SC35 splicing speckles. Positions 16-32 (RSSSSSSSSSSSSASRA) are enriched in low complexity. The 109-residue stretch at 61 to 169 (PLAFPARPGG…QQTFRTEIKI (109 aa)) folds into the sHSP domain.

It belongs to the small heat shock protein (HSP20) family. In terms of assembly, interacts with C-terminal domain of actin-binding protein 280. In terms of tissue distribution, found in both cardiac and slow skeletal (soleus) muscle.

The protein localises to the cytoplasm. It is found in the nucleus. Its subcellular location is the cajal body. This is Heat shock protein beta-7 (Hspb7) from Mus musculus (Mouse).